The following is a 490-amino-acid chain: POC1 centriolar protein homolog B (490 aa).

WD repeat units follow at residues 16-55, 58-97, 100-139, 142-181, 184-223, 226-265, and 268-307; these read GHKD…RAFR, GHTD…ESTV, AHTA…FLYS, RHTN…CINI, DYGG…LIQH, VHNA…LIYT, and GHKG…LNYR. Residues 375–388 are compositionally biased toward polar residues; that stretch reads DGASSSRAQFTSGM. Residues 375 to 427 are disordered; sequence DGASSSRAQFTSGMDSGPFRTHTQAREEEDENQEERFAGGMTASPAERSGIPS. A coiled-coil region spans residues 431 to 463; that stretch reads STLENIVQQLDILTQTVAVLEERLTLTEDKLRT.

This sequence belongs to the WD repeat POC1 family.

Its subcellular location is the cytoplasm. It is found in the cytoskeleton. The protein localises to the microtubule organizing center. It localises to the centrosome. The protein resides in the centriole. Functionally, plays an important role in centriole assembly and/or stability and ciliogenesis. Involved in early steps of centriole duplication, as well as in the later steps of centriole length control. This chain is POC1 centriolar protein homolog B, found in Danio rerio (Zebrafish).